Reading from the N-terminus, the 182-residue chain is Putative manganese efflux pump MntP (182 aa).

A run of 6 helical transmembrane segments spans residues 6–26, 37–57, 71–91, 101–121, 131–151, and 162–182; these read LIPL…VSLG, ILYI…IGMV, HFAG…SSIL, IGIS…SVGL, IITI…GLFI, and YGEI…LFPI.

Belongs to the MntP (TC 9.B.29) family.

The protein resides in the cell membrane. In terms of biological role, probably functions as a manganese efflux pump. The sequence is that of Putative manganese efflux pump MntP from Bacillus thuringiensis subsp. konkukian (strain 97-27).